A 424-amino-acid chain; its full sequence is Inositol phosphosphingolipids phospholipase C (424 aa).

Residue Glu-49 participates in Mg(2+) binding. Residue His-289 is the Proton acceptor of the active site. Helical transmembrane passes span 335–357 (LRIA…IAWC) and 364–386 (VIIL…CIGL).

Belongs to the neutral sphingomyelinase family. Mg(2+) serves as cofactor.

The protein localises to the cell membrane. The protein resides in the endoplasmic reticulum membrane. The protein operates within lipid metabolism; sphingolipid metabolism. In terms of biological role, inositol phosphosphingolipids phospholipase essential for the coordination of cell wall formation. Responsible for the hydrolysis of the phosphosphingolipids (IPS), inositol phosphorylceramide (IPC), mannosylinositol phosphorylceramide (MIPC), and mannosyldiinositol phosphorylceramide (M(IP)2C). The polypeptide is Inositol phosphosphingolipids phospholipase C (css1) (Schizosaccharomyces pombe (strain 972 / ATCC 24843) (Fission yeast)).